The primary structure comprises 156 residues: Small ribosomal subunit protein uS7 (156 aa).

The protein belongs to the universal ribosomal protein uS7 family. In terms of assembly, part of the 30S ribosomal subunit. Contacts proteins S9 and S11.

One of the primary rRNA binding proteins, it binds directly to 16S rRNA where it nucleates assembly of the head domain of the 30S subunit. Is located at the subunit interface close to the decoding center, probably blocks exit of the E-site tRNA. The sequence is that of Small ribosomal subunit protein uS7 from Bartonella henselae (strain ATCC 49882 / DSM 28221 / CCUG 30454 / Houston 1) (Rochalimaea henselae).